The following is a 156-amino-acid chain: Small ribosomal subunit protein uS7 (156 aa).

The protein belongs to the universal ribosomal protein uS7 family. As to quaternary structure, part of the 30S ribosomal subunit. Contacts proteins S9 and S11.

In terms of biological role, one of the primary rRNA binding proteins, it binds directly to 16S rRNA where it nucleates assembly of the head domain of the 30S subunit. Is located at the subunit interface close to the decoding center, probably blocks exit of the E-site tRNA. The sequence is that of Small ribosomal subunit protein uS7 from Lachnospira eligens (strain ATCC 27750 / DSM 3376 / VPI C15-48 / C15-B4) (Eubacterium eligens).